A 547-amino-acid polypeptide reads, in one-letter code: Chaperonin GroEL (547 aa).

Residues 30 to 33 (TLGP), Lys-51, 87 to 91 (DGTTT), Gly-415, and Asp-496 each bind ATP.

This sequence belongs to the chaperonin (HSP60) family. Forms a cylinder of 14 subunits composed of two heptameric rings stacked back-to-back. Interacts with the co-chaperonin GroES.

It localises to the cytoplasm. The enzyme catalyses ATP + H2O + a folded polypeptide = ADP + phosphate + an unfolded polypeptide.. Its function is as follows. Together with its co-chaperonin GroES, plays an essential role in assisting protein folding. The GroEL-GroES system forms a nano-cage that allows encapsulation of the non-native substrate proteins and provides a physical environment optimized to promote and accelerate protein folding. This is Chaperonin GroEL from Pelodictyon phaeoclathratiforme (strain DSM 5477 / BU-1).